Reading from the N-terminus, the 101-residue chain is Large ribosomal subunit protein uL23 (101 aa).

It belongs to the universal ribosomal protein uL23 family. Part of the 50S ribosomal subunit. Contacts protein L29, and trigger factor when it is bound to the ribosome.

Functionally, one of the early assembly proteins it binds 23S rRNA. One of the proteins that surrounds the polypeptide exit tunnel on the outside of the ribosome. Forms the main docking site for trigger factor binding to the ribosome. The polypeptide is Large ribosomal subunit protein uL23 (Synechocystis sp. (strain ATCC 27184 / PCC 6803 / Kazusa)).